The following is a 255-amino-acid chain: Putative oxidoreductase YtkK (255 aa).

T7–G14 lines the NAD(+) pocket.

The protein belongs to the short-chain dehydrogenases/reductases (SDR) family.

This Bacillus subtilis (strain 168) protein is Putative oxidoreductase YtkK (ytkK).